The following is a 565-amino-acid chain: Oxygen-dependent choline dehydrogenase (565 aa).

Position 7-36 (7-36) interacts with FAD; the sequence is DYIICGAGSAGNVLATRLTEDPGVTVLLLE. Histidine 474 functions as the Proton acceptor in the catalytic mechanism.

Belongs to the GMC oxidoreductase family. The cofactor is FAD.

The catalysed reaction is choline + A = betaine aldehyde + AH2. It carries out the reaction betaine aldehyde + NAD(+) + H2O = glycine betaine + NADH + 2 H(+). It functions in the pathway amine and polyamine biosynthesis; betaine biosynthesis via choline pathway; betaine aldehyde from choline (cytochrome c reductase route): step 1/1. Functionally, involved in the biosynthesis of the osmoprotectant glycine betaine. Catalyzes the oxidation of choline to betaine aldehyde and betaine aldehyde to glycine betaine at the same rate. This Burkholderia mallei (strain ATCC 23344) protein is Oxygen-dependent choline dehydrogenase.